The primary structure comprises 386 residues: uncharacterized protein (386 aa).

Residues 355–386 (PSEAQKVQVKSNKKPPIAPKPEHLKKRDHGLC) are disordered. The span at 377–386 (HLKKRDHGLC) shows a compositional bias: basic residues.

This is an uncharacterized protein from Rickettsia prowazekii (strain Madrid E).